The sequence spans 504 residues: Lysine--tRNA ligase (504 aa).

Positions 411 and 418 each coordinate Mg(2+).

This sequence belongs to the class-II aminoacyl-tRNA synthetase family. In terms of assembly, homodimer. Mg(2+) serves as cofactor.

It is found in the cytoplasm. It carries out the reaction tRNA(Lys) + L-lysine + ATP = L-lysyl-tRNA(Lys) + AMP + diphosphate. The sequence is that of Lysine--tRNA ligase from Clostridium botulinum (strain Okra / Type B1).